A 418-amino-acid chain; its full sequence is Glutamyl-tRNA reductase (418 aa).

Residues 49–52 (TCNR), Ser-108, 113–115 (EPQ), and Gln-119 contribute to the substrate site. Cys-50 serves as the catalytic Nucleophile. An NADP(+)-binding site is contributed by 188–193 (GAGETI).

Belongs to the glutamyl-tRNA reductase family. In terms of assembly, homodimer.

The catalysed reaction is (S)-4-amino-5-oxopentanoate + tRNA(Glu) + NADP(+) = L-glutamyl-tRNA(Glu) + NADPH + H(+). Its pathway is porphyrin-containing compound metabolism; protoporphyrin-IX biosynthesis; 5-aminolevulinate from L-glutamyl-tRNA(Glu): step 1/2. Catalyzes the NADPH-dependent reduction of glutamyl-tRNA(Glu) to glutamate 1-semialdehyde (GSA). In Aliivibrio fischeri (strain ATCC 700601 / ES114) (Vibrio fischeri), this protein is Glutamyl-tRNA reductase.